We begin with the raw amino-acid sequence, 1392 residues long: DNA-directed RNA polymerase subunit beta (1392 aa).

Belongs to the RNA polymerase beta chain family. The RNAP catalytic core consists of 2 alpha, 1 beta, 1 beta' and 1 omega subunit. When a sigma factor is associated with the core the holoenzyme is formed, which can initiate transcription.

The catalysed reaction is RNA(n) + a ribonucleoside 5'-triphosphate = RNA(n+1) + diphosphate. Functionally, DNA-dependent RNA polymerase catalyzes the transcription of DNA into RNA using the four ribonucleoside triphosphates as substrates. In Neisseria meningitidis serogroup B (strain ATCC BAA-335 / MC58), this protein is DNA-directed RNA polymerase subunit beta.